The sequence spans 317 residues: SURF1-like protein (317 aa).

2 helical membrane-spanning segments follow: residues 78 to 98 and 293 to 313; these read GSIL…WQIY and HMNY…MWIH.

This sequence belongs to the SURF1 family.

The protein localises to the mitochondrion inner membrane. Probably involved in the biogenesis of the COX complex. The sequence is that of SURF1-like protein (sft-1) from Caenorhabditis briggsae.